The following is a 247-amino-acid chain: Adenosylcobinamide-GDP ribazoletransferase (247 aa).

5 helical membrane-spanning segments follow: residues 34 to 54, 59 to 79, 113 to 133, 138 to 158, and 187 to 207; these read IVMF…IFIL, CGIP…TGGF, GGLA…ELAL, MLAA…LLMY, and LAVI…AMVV.

The protein belongs to the CobS family. It depends on Mg(2+) as a cofactor.

Its subcellular location is the cell inner membrane. The enzyme catalyses alpha-ribazole + adenosylcob(III)inamide-GDP = adenosylcob(III)alamin + GMP + H(+). It carries out the reaction alpha-ribazole 5'-phosphate + adenosylcob(III)inamide-GDP = adenosylcob(III)alamin 5'-phosphate + GMP + H(+). It participates in cofactor biosynthesis; adenosylcobalamin biosynthesis; adenosylcobalamin from cob(II)yrinate a,c-diamide: step 7/7. Functionally, joins adenosylcobinamide-GDP and alpha-ribazole to generate adenosylcobalamin (Ado-cobalamin). Also synthesizes adenosylcobalamin 5'-phosphate from adenosylcobinamide-GDP and alpha-ribazole 5'-phosphate. The chain is Adenosylcobinamide-GDP ribazoletransferase from Salmonella dublin (strain CT_02021853).